Here is a 493-residue protein sequence, read N- to C-terminus: Glycerol kinase (493 aa).

Thr13 lines the ADP pocket. ATP-binding residues include Thr13, Thr14, and Ser15. Thr13 serves as a coordination point for sn-glycerol 3-phosphate. Arg17 serves as a coordination point for ADP. Residues Arg83, Glu84, Tyr135, and Asp244 each coordinate sn-glycerol 3-phosphate. Residues Arg83, Glu84, Tyr135, Asp244, and Gln245 each contribute to the glycerol site. Residues Thr266 and Gly309 each contribute to the ADP site. ATP-binding residues include Thr266, Gly309, Gln313, and Gly410. ADP is bound by residues Gly410 and Asn414.

This sequence belongs to the FGGY kinase family.

The catalysed reaction is glycerol + ATP = sn-glycerol 3-phosphate + ADP + H(+). The protein operates within polyol metabolism; glycerol degradation via glycerol kinase pathway; sn-glycerol 3-phosphate from glycerol: step 1/1. Inhibited by fructose 1,6-bisphosphate (FBP). Functionally, key enzyme in the regulation of glycerol uptake and metabolism. Catalyzes the phosphorylation of glycerol to yield sn-glycerol 3-phosphate. The polypeptide is Glycerol kinase (Shewanella pealeana (strain ATCC 700345 / ANG-SQ1)).